A 157-amino-acid chain; its full sequence is Protein MG115 (157 aa).

Belongs to the CinA family.

The sequence is that of Protein MG115 from Mycoplasma genitalium (strain ATCC 33530 / DSM 19775 / NCTC 10195 / G37) (Mycoplasmoides genitalium).